The sequence spans 82 residues: Small ribosomal subunit protein uS17 (82 aa).

Belongs to the universal ribosomal protein uS17 family. Part of the 30S ribosomal subunit.

Its function is as follows. One of the primary rRNA binding proteins, it binds specifically to the 5'-end of 16S ribosomal RNA. The sequence is that of Small ribosomal subunit protein uS17 from Aeromonas salmonicida (strain A449).